The primary structure comprises 115 residues: MFSIIQKIEKEQIKKNIPIFRSGDTIEVKVWVIEGSKKRLQSFEGIVIAIKNRCLNSSFTVRKISNGEGVERVFQTHSHGIEEILVKRKGLVRKAKLYYLRTRTGKAARIKERLN.

It belongs to the bacterial ribosomal protein bL19 family.

In terms of biological role, this protein is located at the 30S-50S ribosomal subunit interface and may play a role in the structure and function of the aminoacyl-tRNA binding site. The protein is Large ribosomal subunit protein bL19 of Buchnera aphidicola subsp. Acyrthosiphon pisum (strain Tuc7).